Consider the following 89-residue polypeptide: Small ribosomal subunit protein uS14 (89 aa).

Belongs to the universal ribosomal protein uS14 family. In terms of assembly, part of the 30S ribosomal subunit. Contacts proteins S3 and S10.

Functionally, binds 16S rRNA, required for the assembly of 30S particles and may also be responsible for determining the conformation of the 16S rRNA at the A site. This Chloroherpeton thalassium (strain ATCC 35110 / GB-78) protein is Small ribosomal subunit protein uS14.